The primary structure comprises 155 residues: DNA-directed RNA polymerase 1A (155 aa).

Asp88 is an active-site residue.

It belongs to the phage and mitochondrial RNA polymerase family.

The enzyme catalyses RNA(n) + a ribonucleoside 5'-triphosphate = RNA(n+1) + diphosphate. DNA-dependent RNA polymerase catalyzes the transcription of DNA into RNA using the four ribonucleoside triphosphates as substrates. In Nicotiana tabacum (Common tobacco), this protein is DNA-directed RNA polymerase 1A (RPOT1-SYL).